A 545-amino-acid polypeptide reads, in one-letter code: ATP synthase subunit alpha (545 aa).

174 to 181 (GDRKTGKT) contacts ATP.

This sequence belongs to the ATPase alpha/beta chains family. As to quaternary structure, F-type ATPases have 2 components, CF(1) - the catalytic core - and CF(0) - the membrane proton channel. CF(1) has five subunits: alpha(3), beta(3), gamma(1), delta(1), epsilon(1). CF(0) has three main subunits: a(1), b(2) and c(9-12). The alpha and beta chains form an alternating ring which encloses part of the gamma chain. CF(1) is attached to CF(0) by a central stalk formed by the gamma and epsilon chains, while a peripheral stalk is formed by the delta and b chains.

It is found in the cell membrane. It carries out the reaction ATP + H2O + 4 H(+)(in) = ADP + phosphate + 5 H(+)(out). Functionally, produces ATP from ADP in the presence of a proton gradient across the membrane. The alpha chain is a regulatory subunit. The chain is ATP synthase subunit alpha from Cutibacterium acnes (strain DSM 16379 / KPA171202) (Propionibacterium acnes).